Consider the following 149-residue polypeptide: Transcriptional repressor NrdR (149 aa).

A zinc finger lies at 3-34; the sequence is CPFCGANDTKVIDSRLVADGHQVRRRRQCLAC. The ATP-cone domain occupies 49 to 139; it reads PRVIKTDGNR…VYRSFEDIRE (91 aa).

This sequence belongs to the NrdR family. Zn(2+) serves as cofactor.

Negatively regulates transcription of bacterial ribonucleotide reductase nrd genes and operons by binding to NrdR-boxes. The sequence is that of Transcriptional repressor NrdR from Photobacterium profundum (strain SS9).